The sequence spans 1407 residues: DNA-directed RNA polymerase subunit beta' (1407 aa).

Zn(2+)-binding residues include Cys-70, Cys-72, Cys-85, and Cys-88. Mg(2+) contacts are provided by Asp-460, Asp-462, and Asp-464. Zn(2+) is bound by residues Cys-814, Cys-888, Cys-895, and Cys-898.

Belongs to the RNA polymerase beta' chain family. The RNAP catalytic core consists of 2 alpha, 1 beta, 1 beta' and 1 omega subunit. When a sigma factor is associated with the core the holoenzyme is formed, which can initiate transcription. Requires Mg(2+) as cofactor. The cofactor is Zn(2+).

The catalysed reaction is RNA(n) + a ribonucleoside 5'-triphosphate = RNA(n+1) + diphosphate. DNA-dependent RNA polymerase catalyzes the transcription of DNA into RNA using the four ribonucleoside triphosphates as substrates. This chain is DNA-directed RNA polymerase subunit beta', found in Erwinia tasmaniensis (strain DSM 17950 / CFBP 7177 / CIP 109463 / NCPPB 4357 / Et1/99).